We begin with the raw amino-acid sequence, 334 residues long: Protein-glutamate methylesterase/protein-glutamine glutaminase 2 (334 aa).

The Response regulatory domain maps to 2–120; it reads NIGIVNDLPL…GAAGDTTKLL (119 aa). Asp53 is modified (4-aspartylphosphate). Residues 134 to 334 enclose the CheB-type methylesterase domain; that stretch reads PGSSRLAGAA…AGELAALARI (201 aa). Residues Ser157, His184, and Asp277 contribute to the active site.

Belongs to the CheB family. Post-translationally, phosphorylated by CheA. Phosphorylation of the N-terminal regulatory domain activates the methylesterase activity.

The protein localises to the cytoplasm. The enzyme catalyses [protein]-L-glutamate 5-O-methyl ester + H2O = L-glutamyl-[protein] + methanol + H(+). It carries out the reaction L-glutaminyl-[protein] + H2O = L-glutamyl-[protein] + NH4(+). Involved in chemotaxis. Part of a chemotaxis signal transduction system that modulates chemotaxis in response to various stimuli. Catalyzes the demethylation of specific methylglutamate residues introduced into the chemoreceptors (methyl-accepting chemotaxis proteins or MCP) by CheR. Also mediates the irreversible deamidation of specific glutamine residues to glutamic acid. The sequence is that of Protein-glutamate methylesterase/protein-glutamine glutaminase 2 from Burkholderia orbicola (strain AU 1054).